Reading from the N-terminus, the 237-residue chain is Cell division cycle-associated protein 4 (237 aa).

An SERTA domain is found at 26–73 (YSLQRQSLLDMSLVKLQLCHMLVEPNLCRSVLIANTVRQIQEEMSQDG).

Expressed preferentially in hematopoietic progenitors and mature blood cells. Expressed at low levels in the heart, lung, spleen, and thymus and at a higher level in muscle.

Its subcellular location is the nucleus. In terms of biological role, may participate in the regulation of cell proliferation through the E2F/RB pathway. May be involved in molecular regulation of hematopoietic stem cells and progenitor cell lineage commitment and differentiation. The polypeptide is Cell division cycle-associated protein 4 (Cdca4) (Mus musculus (Mouse)).